A 271-amino-acid chain; its full sequence is Tryptophan synthase alpha chain (271 aa).

Residues E49 and D60 each act as proton acceptor in the active site.

Belongs to the TrpA family. In terms of assembly, tetramer of two alpha and two beta chains.

The catalysed reaction is (1S,2R)-1-C-(indol-3-yl)glycerol 3-phosphate + L-serine = D-glyceraldehyde 3-phosphate + L-tryptophan + H2O. Its pathway is amino-acid biosynthesis; L-tryptophan biosynthesis; L-tryptophan from chorismate: step 5/5. Functionally, the alpha subunit is responsible for the aldol cleavage of indoleglycerol phosphate to indole and glyceraldehyde 3-phosphate. The chain is Tryptophan synthase alpha chain from Burkholderia pseudomallei (strain K96243).